The chain runs to 597 residues: Zinc finger CCCH domain-containing protein 29 (597 aa).

ANK repeat units follow at residues 76–106 and 111–143; these read EERTPLMVAAMYGSMEVLNYIIATGRSDVNR and EKVTALHCAVSGCSVSIVEIIKILLDASASPNC. 2 C3H1-type zinc fingers span residues 254-281 and 289-313; these read PYTCVPCPEFRKGSCPKGDSCEYAHGVF and QYRTRLCKDETGCARRVCFFAHRRD. Residues 320–337 show a composition bias toward polar residues; that stretch reads ASTGSAMVSPRSSNQSPE. A disordered region spans residues 320 to 341; the sequence is ASTGSAMVSPRSSNQSPEMSVM.

As to expression, expressed in roots and anthers.

It is found in the nucleus. Involved in salt stress response. May positively modulate plant tolerance to salt stress. The polypeptide is Zinc finger CCCH domain-containing protein 29 (Arabidopsis thaliana (Mouse-ear cress)).